A 233-amino-acid polypeptide reads, in one-letter code: Large ribosomal subunit protein uL1 (233 aa).

This sequence belongs to the universal ribosomal protein uL1 family. Part of the 50S ribosomal subunit.

Its function is as follows. Binds directly to 23S rRNA. The L1 stalk is quite mobile in the ribosome, and is involved in E site tRNA release. Protein L1 is also a translational repressor protein, it controls the translation of the L11 operon by binding to its mRNA. The polypeptide is Large ribosomal subunit protein uL1 (Buchnera aphidicola subsp. Baizongia pistaciae (strain Bp)).